The chain runs to 444 residues: Methylenetetrahydrofolate--tRNA-(uracil-5-)-methyltransferase TrmFO (444 aa).

9–14 (GAGLAG) lines the FAD pocket.

It belongs to the MnmG family. TrmFO subfamily. The cofactor is FAD.

Its subcellular location is the cytoplasm. The catalysed reaction is uridine(54) in tRNA + (6R)-5,10-methylene-5,6,7,8-tetrahydrofolate + NADH + H(+) = 5-methyluridine(54) in tRNA + (6S)-5,6,7,8-tetrahydrofolate + NAD(+). The enzyme catalyses uridine(54) in tRNA + (6R)-5,10-methylene-5,6,7,8-tetrahydrofolate + NADPH + H(+) = 5-methyluridine(54) in tRNA + (6S)-5,6,7,8-tetrahydrofolate + NADP(+). In terms of biological role, catalyzes the folate-dependent formation of 5-methyl-uridine at position 54 (M-5-U54) in all tRNAs. The chain is Methylenetetrahydrofolate--tRNA-(uracil-5-)-methyltransferase TrmFO from Koribacter versatilis (strain Ellin345).